A 512-amino-acid polypeptide reads, in one-letter code: MMRKALLALCVATAFAVAQAQNVAYPNFPYCQCIKSPSPYSLEPVVKSNRTGQYCFTLRVTKPSPSATGYCATKADIKKIEINVNQVCDVFGNVVNATLNGVPTKVGPAFDTPPDGPNTSRILRFTQLNLGLDSDGAMLCITLGQNDKGKGCTTLEDLCAPPAGAPKGTCSLALFDSKPDCCPISRVSPPAPPPPPPPPPPEPVAVPITPPCKTCVYATITALPPLLFPFQLTPSICQSVADKIAGDLEMIVTSYSIGYSGATITCSGNVIKVCASFSLPPGAPYTGLQADISNALTFWLSLLAPSTGCPAYFANHQVTVTVGGDGDPNSVTCLEGTATTTCKPGNPDFPKCECETKPAATRFAALPTLTQEPGRPSNRTNSTLYCFTLQVVAPLNPNGLCGNTTTLLKAELWGNDIPTQRRKILALAFKAAGASSPLRYLSPSWGSAGEQTLKVSGLNWDASQADGAKICMELSNDTNLKTFCNTGQDTCWINLFSPDKQCCPLFAASLTP.

Residues M1–A18 form the signal peptide. N49, N96, N118, N378, N381, N403, and N476 each carry an N-linked (GlcNAc...) asparagine glycan.

It is found in the secreted. Its subcellular location is the extracellular space. The protein localises to the extracellular matrix. Its function is as follows. May be involved in conversion of asexual males and females to the sexual pathway. The sequence is that of Perphorin-1 from Volvox carteri (Green alga).